A 200-amino-acid chain; its full sequence is 3-isopropylmalate dehydratase small subunit (200 aa).

Belongs to the LeuD family. LeuD type 1 subfamily. In terms of assembly, heterodimer of LeuC and LeuD.

It carries out the reaction (2R,3S)-3-isopropylmalate = (2S)-2-isopropylmalate. It functions in the pathway amino-acid biosynthesis; L-leucine biosynthesis; L-leucine from 3-methyl-2-oxobutanoate: step 2/4. In terms of biological role, catalyzes the isomerization between 2-isopropylmalate and 3-isopropylmalate, via the formation of 2-isopropylmaleate. This Edwardsiella ictaluri (strain 93-146) protein is 3-isopropylmalate dehydratase small subunit.